A 133-amino-acid polypeptide reads, in one-letter code: Ribosome-binding factor A (133 aa).

The protein belongs to the RbfA family. Monomer. Binds 30S ribosomal subunits, but not 50S ribosomal subunits or 70S ribosomes.

The protein localises to the cytoplasm. In terms of biological role, one of several proteins that assist in the late maturation steps of the functional core of the 30S ribosomal subunit. Associates with free 30S ribosomal subunits (but not with 30S subunits that are part of 70S ribosomes or polysomes). Required for efficient processing of 16S rRNA. May interact with the 5'-terminal helix region of 16S rRNA. The protein is Ribosome-binding factor A of Pseudomonas fluorescens (strain ATCC BAA-477 / NRRL B-23932 / Pf-5).